The primary structure comprises 1415 residues: DNA-directed RNA polymerase subunit beta' (1415 aa).

Residues Cys-72, Cys-74, Cys-87, and Cys-90 each contribute to the Zn(2+) site. Mg(2+) contacts are provided by Asp-463, Asp-465, and Asp-467. Zn(2+) contacts are provided by Cys-811, Cys-885, Cys-892, and Cys-895.

This sequence belongs to the RNA polymerase beta' chain family. The RNAP catalytic core consists of 2 alpha, 1 beta, 1 beta' and 1 omega subunit. When a sigma factor is associated with the core the holoenzyme is formed, which can initiate transcription. The cofactor is Mg(2+). It depends on Zn(2+) as a cofactor.

It carries out the reaction RNA(n) + a ribonucleoside 5'-triphosphate = RNA(n+1) + diphosphate. DNA-dependent RNA polymerase catalyzes the transcription of DNA into RNA using the four ribonucleoside triphosphates as substrates. The polypeptide is DNA-directed RNA polymerase subunit beta' (Cereibacter sphaeroides (strain ATCC 17029 / ATH 2.4.9) (Rhodobacter sphaeroides)).